The chain runs to 588 residues: Ribonuclease Y (588 aa).

The chain crosses the membrane as a helical span at residues 7 to 27 (VLLVAVLLLALIVLGAVLVGV). The tract at residues 130 to 162 (ARRSGEREAAVLATTTREQAAEVERRAARMDDR) is disordered. A compositionally biased stretch (basic and acidic residues) spans 148 to 162 (QAAEVERRAARMDDR). In terms of domain architecture, KH spans 278–359 (VVSVLHLPGD…HRIEEVHDLA (82 aa)). The HD domain occupies 404–497 (VLKHLVETAH…TQASDACSGG (94 aa)).

This sequence belongs to the RNase Y family.

Its subcellular location is the cell membrane. Its function is as follows. Endoribonuclease that initiates mRNA decay. This is Ribonuclease Y from Salinispora arenicola (strain CNS-205).